The primary structure comprises 696 residues: Probable glutamine--fructose-6-phosphate aminotransferase [isomerizing] (696 aa).

Cysteine 2 acts as the For GATase activity in catalysis. The 302-residue stretch at 2–303 (CGIFGYINYL…DDDIAHVRDG (302 aa)) folds into the Glutamine amidotransferase type-2 domain. SIS domains follow at residues 375–514 (YYDI…DSVS) and 547–686 (AIEQ…VDQP).

The enzyme catalyses D-fructose 6-phosphate + L-glutamine = D-glucosamine 6-phosphate + L-glutamate. Its pathway is nucleotide-sugar biosynthesis; UDP-N-acetyl-alpha-D-glucosamine biosynthesis; alpha-D-glucosamine 6-phosphate from D-fructose 6-phosphate: step 1/1. In terms of biological role, involved in amino sugar synthesis (formation of chitin, supplies the amino sugars of asparagine-linked oligosaccharides of glycoproteins). The polypeptide is Probable glutamine--fructose-6-phosphate aminotransferase [isomerizing] (Schizosaccharomyces pombe (strain 972 / ATCC 24843) (Fission yeast)).